Consider the following 203-residue polypeptide: Ribonuclease HII (203 aa).

In terms of domain architecture, RNase H type-2 spans 15 to 201; the sequence is LLVAGLDEAG…VAQAPLRFPE (187 aa). A divalent metal cation-binding residues include Asp-21, Glu-22, and Asp-111.

It belongs to the RNase HII family. Mn(2+) is required as a cofactor. It depends on Mg(2+) as a cofactor.

Its subcellular location is the cytoplasm. It catalyses the reaction Endonucleolytic cleavage to 5'-phosphomonoester.. Its function is as follows. Endonuclease that specifically degrades the RNA of RNA-DNA hybrids. The protein is Ribonuclease HII of Thermus thermophilus (strain ATCC 27634 / DSM 579 / HB8).